The following is a 552-amino-acid chain: Arginine--tRNA ligase (552 aa).

Residues 123 to 133 (ANPTGPLTIGR) carry the 'HIGH' region motif.

This sequence belongs to the class-I aminoacyl-tRNA synthetase family. Monomer.

It localises to the cytoplasm. It catalyses the reaction tRNA(Arg) + L-arginine + ATP = L-arginyl-tRNA(Arg) + AMP + diphosphate. In Chlorobium luteolum (strain DSM 273 / BCRC 81028 / 2530) (Pelodictyon luteolum), this protein is Arginine--tRNA ligase.